Reading from the N-terminus, the 309-residue chain is MLRLWEELNRVENLFLELLDDPKKKDVLLYLICYCQLVRRDGEYEVELPKLINCAEKPYKYISGNWQDVLLELGVLYLKDKKGKVYTGKEILLVKNPEGFKVGILPDYREDFYKFYTKLLKYWSVLNSRRTLGSNTTPDYYTPLLVHTFNEKLFKEAQYFSEILAMRFPKEKNLFLSVKLVSEFYREYAKTGRVKADNLNDAINFLSDTPDVFYSVNVKKFKKDIKKFLENLNKGEFYYITIEFASENRGKKRSILSKLWNFIKSLGGKRWNSRSSGMDYYSFIEHLLKKHRRQMMRSLESSTPRLQGT.

This is an uncharacterized protein from Aquifex aeolicus (strain VF5).